We begin with the raw amino-acid sequence, 402 residues long: MLENIQRSWFEHYMVPCFSPAKFIPVRAKGSKVWDQDGKEYIDFAGGIAVNSLGHAHPELKDELIYQIDKIWHIGNGYTNEPVLKLAKRLVENTFADKAFFCNSGAEANEAALKLARKYAADKYGKNKNEIISFKDSFHGRTLFTVTVGGQPKYSQDYAPLPQEITHLPYNNLSAIREHISENTCAVIVEPIIGEGGVIPADPAFLQELRTLCDRFQALLIFDEIQTGVGRTGYLYAYQEYGVEPDILTSAKGLGGGFPIGAMLTKQHIAAVFQPGTHGTTFGGNPLATAVANKVLSIVNQAELLTGVLQRHDYFMDKLSKLNQRYQIFSCLRGKGLLLGAELDKAWQGKAKQLTNLAAEEGLIALIAGPDVLRFAPALNIEFADIDEGLVRLESAIMRFVG.

Position 252 is an N6-(pyridoxal phosphate)lysine (Lys252).

The protein belongs to the class-III pyridoxal-phosphate-dependent aminotransferase family. AstC subfamily. The cofactor is pyridoxal 5'-phosphate.

It catalyses the reaction N(2)-succinyl-L-ornithine + 2-oxoglutarate = N-succinyl-L-glutamate 5-semialdehyde + L-glutamate. Its pathway is amino-acid degradation; L-arginine degradation via AST pathway; L-glutamate and succinate from L-arginine: step 3/5. Functionally, catalyzes the transamination of N(2)-succinylornithine and alpha-ketoglutarate into N(2)-succinylglutamate semialdehyde and glutamate. Can also act as an acetylornithine aminotransferase. The sequence is that of Succinylornithine transaminase from Photorhabdus laumondii subsp. laumondii (strain DSM 15139 / CIP 105565 / TT01) (Photorhabdus luminescens subsp. laumondii).